Here is a 610-residue protein sequence, read N- to C-terminus: Elongation factor 4 (610 aa).

The region spanning 11–193 (EKIRNFSIIA…QIVEKVPAPT (183 aa)) is the tr-type G domain. GTP contacts are provided by residues 23–28 (DHGKST) and 140–143 (NKID).

Belongs to the TRAFAC class translation factor GTPase superfamily. Classic translation factor GTPase family. LepA subfamily.

It is found in the cell membrane. It catalyses the reaction GTP + H2O = GDP + phosphate + H(+). Its function is as follows. Required for accurate and efficient protein synthesis under certain stress conditions. May act as a fidelity factor of the translation reaction, by catalyzing a one-codon backward translocation of tRNAs on improperly translocated ribosomes. Back-translocation proceeds from a post-translocation (POST) complex to a pre-translocation (PRE) complex, thus giving elongation factor G a second chance to translocate the tRNAs correctly. Binds to ribosomes in a GTP-dependent manner. This chain is Elongation factor 4, found in Streptococcus pyogenes serotype M6 (strain ATCC BAA-946 / MGAS10394).